The primary structure comprises 78 residues: Apolipoprotein C-I (78 aa).

The first 26 residues, M1–G26, serve as a signal peptide directing secretion.

This sequence belongs to the apolipoprotein C1 family.

The protein resides in the secreted. In terms of biological role, inhibitor of lipoprotein binding to the low density lipoprotein (LDL) receptor, LDL receptor-related protein, and very low density lipoprotein (VLDL) receptor. Associates with high density lipoproteins (HDL) and the triacylglycerol-rich lipoproteins in the plasma and makes up about 10% of the protein of the VLDL and 2% of that of HDL. Appears to interfere directly with fatty acid uptake and is also the major plasma inhibitor of cholesteryl ester transfer protein (CETP). Binds free fatty acids and reduces their intracellular esterification. Modulates the interaction of APOE with beta-migrating VLDL and inhibits binding of beta-VLDL to the LDL receptor-related protein. The protein is Apolipoprotein C-I (APOC1) of Panthera tigris altaica (Siberian tiger).